A 918-amino-acid chain; its full sequence is MEEKRVKCKKKLTSTIGTWKYIQACIFFAIILISNFYGLKSFTDGFLLRRAVLNQTSLCENPPADVREWKNSSGCWAPKIFERAVIVIIDALRYDFLIPYNDSNYYHNAFTTPYETSVLHPENSYLTQFIADAPTTTSQRLKGLTTGSLPTFIDLGSNFAGTNIDEDNLLLQWKSLDKQIVLLGDDTWDVLFHDYLNETLSQPAFSFNVPDLHGVDNKVNQYVFDYIKDANFDVLIAHYLGVDHVGHRLGPDHPTMRDKLNQMDRCVKEMMDLLDDSTLLIVMGDHGMDNKGNHGGDSFDEINSVLWMYSKKPTFGYLKQPGKVLSANQVDLVPTLSLLLGNPIPYGNLGTLIPEPFYYYGDEYLSKAQKINIGQLNRFFSEYDLDASDFLSSSVHKNNNSYLDQYFLDFDYARDAFSYFKAIWAEFSLFPMIIGFLLLIIGGFNLALLMQDKSVIFRMSANMAPSVMKCLPVCLILILANNELHSPFPAEFYVLLPSFYILLNSFNQKLMEYFKGFVKLDYFSIFITFLHVCSFGSNSFTVWEDRLCHFLIITIGLVMFCKCFSEMSPLFACSTYSALAFILLQVISSYVTNCREEQGAFCVSTYISTPDNSLRTLIVLALMALSSIILPLILQLHLRRVLGLSLKLYHLSILYFFELISSIFWIAHHVFANDALLEKQYHHVLYSLANTYVICILGVLIWQFFLLSRSKFAKINVIERSYFVFALLYSFLSFLQRPLGHLSLFSCFLQILLLIQLKQWQPSVGHNFFSVTLGLLGLSHFFTTGNQAAISSLDWNFAFIHSKSAENQAISAIFMFLHTVGAPILTCISIPLFSFEPLSKKNRFLINLFRFSFSFILYNLLISTSTVFFAGFFRRHLMVWKVFAPRFMLSGILLVTHQLFVLIQCFGSSVVKFPEDAE.

The helical transmembrane segment at 16 to 36 threads the bilayer; it reads IGTWKYIQACIFFAIILISNF. N-linked (GlcNAc...) asparagine glycosylation is found at Asn54, Asn71, Asn101, Asn197, and Asn399. 15 helical membrane-spanning segments follow: residues 429 to 449, 459 to 479, 486 to 506, 523 to 543, 547 to 563, 567 to 587, 616 to 636, 651 to 671, 687 to 707, 715 to 735, 738 to 758, 762 to 782, 813 to 833, 853 to 873, and 887 to 907; these read LFPM…LALL, MSAN…ILIL, SPFP…LNSF, FSIF…FTVW, LCHF…FCKC, MSPL…LQVI, TLIV…ILQL, LSIL…HHVF, SLAN…FFLL, INVI…LSFL, PLGH…IQLK, PSVG…SHFF, IFMF…IPLF, FSFI…AGFF, and FMLS…QCFG.

This sequence belongs to the PIGG/PIGN/PIGO family. PIGO subfamily. Glycosylated.

The protein resides in the endoplasmic reticulum membrane. It functions in the pathway glycolipid biosynthesis; glycosylphosphatidylinositol-anchor biosynthesis. Its function is as follows. Involved in glycosylphosphatidylinositol-anchor biosynthesis. Transfers ethanolamine phosphate to the GPI third mannose which links the GPI-anchor to the C-terminus of the proteins by an amide bond. Involved in cell wall biosynthesis. The chain is GPI ethanolamine phosphate transferase 3 (gpi13) from Schizosaccharomyces pombe (strain 972 / ATCC 24843) (Fission yeast).